A 635-amino-acid polypeptide reads, in one-letter code: Sodium- and chloride-dependent creatine transporter 1 (635 aa).

Residues 1 to 27 (MAKKSAENGIYSVSGDEKKGPLIVSGP) form a disordered region. At 1–60 (MAKKSAENGIYSVSGDEKKGPLIVSGPDGAPAKGDGPAGLGAPGGRLAVPPRETWTRQMD) the chain is on the cytoplasmic side. A helical transmembrane segment spans residues 61-81 (FIMSCVGFAVGLGNVWRFPYL). At 82 to 87 (CYKNGG) the chain is on the extracellular side. Residues 88–108 (GVFLIPYVLIALVGGIPIFFL) traverse the membrane as a helical segment. Topologically, residues 109 to 138 (EISLGQFMKAGSINVWNICPLFKGLGYASM) are cytoplasmic. The chain crosses the membrane as a helical span at residues 139-159 (VIVFYCNTYYIMVLAWGFYYL). The Extracellular portion of the chain corresponds to 160 to 230 (VKSFTTTLPW…LSTGLEVPGA (71 aa)). N-linked (GlcNAc...) asparagine glycans are attached at residues Asn192 and Asn197. The chain crosses the membrane as a helical span at residues 231-251 (LNWEVTLCLLACWVLVYFCVW). The Cytoplasmic portion of the chain corresponds to 252 to 269 (KGVKSTGKIVYFTATFPY). The helical transmembrane segment at 270 to 290 (VVLVVLLVRGVLLPGALDGII) threads the bilayer. Residues 291 to 304 (YYLKPDWSKLGSPQ) are Extracellular-facing. Residues 305–325 (VWIDAGTQIFFSYAIGLGALT) form a helical membrane-spanning segment. Over 326 to 341 (ALGSYNRFNNNCYKDA) the chain is Cytoplasmic. Residues 342-362 (IILALINSGTSFFAGFVVFSI) form a helical membrane-spanning segment. Topologically, residues 363–394 (LGFMATEQGVHISKVAESGPGLAFIAYPRAVT) are extracellular. Residues 395–415 (LMPVAPLWAALFFFMLLLLGL) traverse the membrane as a helical segment. The Cytoplasmic segment spans residues 416–444 (DSQFVGVEGFITGLLDLLPASYYFRFQRE). The chain crosses the membrane as a helical span at residues 445-465 (ISVALCCALCFVIDLSMVTDG). At 466 to 479 (GMYVFQLFDYYSAS) the chain is on the extracellular side. The helical transmembrane segment at 480 to 500 (GTTLLWQAFWECVVVAWVYGA) threads the bilayer. At 501 to 520 (DRFMDDIACMIGYRPCPWMK) the chain is on the cytoplasmic side. The chain crosses the membrane as a helical span at residues 521-541 (WCWSFFTPLVCMGIFIFNIVY). The Extracellular portion of the chain corresponds to 542-560 (YEPLVYNNTYVYPWWGEAM). N-linked (GlcNAc...) asparagine glycosylation occurs at Asn548. Residues 561–581 (GWAFALSSMLCVPLHLLGCLL) traverse the membrane as a helical segment. Over 582–635 (RAKGTMAERWQHLTQPIWGLHHLEYRAQDADVRGLTTLTPVSESSKVVVVESVM) the chain is Cytoplasmic. Phosphothreonine is present on residues Thr617 and Thr620. A Phosphoserine modification is found at Ser623.

This sequence belongs to the sodium:neurotransmitter symporter (SNF) (TC 2.A.22) family. SLC6A8 subfamily. Post-translationally, glycosylated. Brain. Highly expressed in brain capillaries branching in all cortical layers and moderately expressed in neuronal perikarya (at protein level).

It localises to the cell membrane. The protein resides in the apical cell membrane. The enzyme catalyses creatine(out) + chloride(out) + 2 Na(+)(out) = creatine(in) + chloride(in) + 2 Na(+)(in). In terms of biological role, creatine:sodium symporter which mediates the uptake of creatine. Plays an important role in supplying creatine to the brain via the blood-brain barrier. The protein is Sodium- and chloride-dependent creatine transporter 1 (Slc6a8) of Mus musculus (Mouse).